A 2774-amino-acid polypeptide reads, in one-letter code: MDGVAEFSEYVSETVDVPSPFDLLEPPTSGGFLKLSKPCCYIFPGGRGDSALFAVNGFNILVDGGSDRKSCFWKLVRHLDRIDSVLLTHIGADNLPGINGLLQRKVAELEEEQSQGSSSYSDWVKNLISPELGVVFFNVPDKLRLPDASRKAKRSIEEACLTLQHLNRLGIQAEPLYRVVSNTIEPLTLFHKMGVGRLDMYVLNPVKDSKEMQFLMQKWAGNSKAKTGIVLANGKEAEISVPYLTSITALVVWLPANPTEKIVRVLFPGNAPQNKILEGLEKLRHLDFLRYPVATQKDLAAGAVPANLKPSKIKHRADSKESLKAAPKTAVSKLAKREEVLEEGAKEARSELAKELAKTEKKAKEPSEKPPEKPSKSERVRGESSEALKAEKRRLIKDKAGKKHLKEKISKLEEKKDKEKKEIKKERKELKKEEGRKEEKKDAKKDEKRKDTKPEVKKLSKPDLKPFTPEVRKTLYKAKAPGRVKVDKGRAARGEKELSSEPRTPPAQKGAAPPAAVSGHRELALSSPEDLTQDFEELKREERGLLAEQRDTGLGEKPLPADATEQGHPSAAIQVTQPSGPVLEGEHVEREKEVVPDSPGDKGSTNRGPDSGAEVEKEKETWEERKQREAELGPENTAAREESEAEVKEDVIEKAELEEMEETHPSDEEGEETKAESFYQKHTQEALKASPKSREALGGRDLGFQGKAPEKETASFLSSLATPAGATEHVSYIQDETIPGYSETEQTISDEEIHDEPDERPAPPRFPTSTYDLSGPEGPGPFEASQAADSAVPASSSKTYGAPETELTYPPNMVAAPLAEEEHVSSATSITECDKLSSFATSVAEDQSVASLTAPQTEETGKSSLLLDTVTSIPSSRTEATQGLDYVPSAGTISPTSSLEEDKGFKSPPCEDFSVTGESEKKGETVGRGLSGEKAVGKEEKYVVTSEKLSGQYAAVFGAPGHTLPPGEPALGEVEERCLSPDDSTVKMASPPPSGPPSAAHTPFHQSPVEDKSEPRDFQEDSWGETKHSPGVSKEDSEEQTVKPGPEEGTSEEGKGPPTRSPQAQDMPVSIAGGQTGCTIQLLPEQDKAIVFETGEAGSNLGAGTLPGEVRTSTEEATEPQKDEVLRFTDQSLSPEDAESLSVLSVVSPDTTKQEATPRSPCSLKEQQPHKDLWPMVSPEDTQSLSFSEESPSKETSLDISSKQLSPESLGTLQFGELNLGKEERGPVMKAEDDSCHLAPVSIPEPHRATVSPSTDETPAGTLPGGSFSHSALSVDRKHSPGEITGPGGHFMTSDSSLTKSPESLSSPAMEDLAVEWEGKAPGKEKEPELKSETRQQKGQILPEKVAVVEQDLIIHQKDGALDEENKPGRQQDKTPEQKGRDLDEKDTAAELDKGPEPKEKDLDREDQGQRAGPPAEKDKASEQRDTDLQQTQATEPRDRAQERRDSEEKDKSLELRDRTPEEKDRILVQEDRAPEHSIPEPTQTDRAPDRKGTDDKEQKEEASEEKEQVLEQKDWALGKEGETLDQEARTAEQKDETLKEDKTQGQKSSFVEDKTTTSKETVLDQKSAEKADSVEQQDGAALEKTRALGLEESPAEGSKAREQEKKYWKEQDVVQGWRETSPTRGEPVGGQKEPVPAWEGKSPEQEVRYWRDRDITLQQDAYWRELSCDRKVWFPHELDGQGARPRYCEERESTFLDEGPDEQEITPLQHTPRSPWTSDFKDFQEPLPQKGLEVERWLAESPVGLPPEEEDKLTRSPFEIISPPASPPEMTGQRVPSAPGQESPVPDTESTAPMRNEPTTPSWLAEIPPWVPKDRPLPPAPLSPAPAPPTPAPEPHTPVPFSWGLAEYDSVVAAVQEGAAELEGGPYSPLGKDYRKAEGEREGEGGAGAPDSSSFSPKVPEAGESLATRDTEQTEPEQREPTPYPDERSFQYADIYEQMMLTGLGPACPTREPPLGASGDWPPHLSTKEEAAGCNTSAEKETSSPASPQNLQSDTPAFSYASLAGPAVPPRQEPDPGPNVEPSITPPAVPPRAPISLSKDLSPPLNGSTVSCSPDRRTPSPKETGRGHWDDGTNDSDLEKGAREQPEKETRSPSPHHPMPMGHSSLWPETEAYSSLSSDSHLGSVRPSLDFPASAFGFSSLQPAPPQLPSPAEPRSAPCGSLAFSGDRALALVPGTPTRTRHDEYLEVTKAPSLDSSLPQLPSPSSPGGPLLSNLPRPASPALSEGSSSEATTPVISSVAERFPPGLEAAEQSAEGLGSGKESAAHSLWDLTPLSPAPSASLDLAPAPAPAPAPAPGLPGDLGDGTLPCRPECTGELTKKPSPFLSPSGDHEANGPGETSLNPPGFVTATAEKEEAEAPHAWERGSWPEGAERSSRPDTLLSSEQPLRPGKSSGGPPCSLSSEVEAGPQGCATDPRPHCGELSPSFLNPPLPPSTDDSDLSTEEARLAGKGGRRRVGRPGATGGPCPMADETPPTSASDSGSSQSDSDVPPETEECPSITAEAALDSDEDGDFLPVDKAGGVSGTHHPRPGHDPPPTPLPDPRPSPPRPDVCMADPEGLSSESGRVERLREKGRPGRRAPGRAKPASPARRLDIRGKRSPTPGKGPVDRTSRTVPRPRSTPSQVTSAEEKDGHSPMSKGLVNGLKAGSTALGSKGGSGPPVYVDLAYIPNHCSGKTADQDFFRRVRASYYVVSGNDPANGEPSRAVLDALLEGKAQWGENLQVTLIPTHDTEVTREWYQQTHEQQQQLNVLVLASSSTVVMQDESFPACKIEF.

Phosphoserine occurs at positions 114, 117, 118, 121, and 155. Position 177 is a phosphotyrosine (tyrosine 177). The disordered stretch occupies residues 310–329; the sequence is PSKIKHRADSKESLKAAPKT. Phosphoserine occurs at positions 319 and 322. Repeat unit 1 spans residues 336–338; that stretch reads KRE. Residues 336–541 form an 11 X 3 AA repeats of K-K-[DE] region; sequence KREEVLEEGA…TQDFEELKRE (206 aa). Residues 342–390 show a composition bias toward basic and acidic residues; sequence EEGAKEARSELAKELAKTEKKAKEPSEKPPEKPSKSERVRGESSEALKA. Disordered regions lie at residues 342–718, 737–808, 845–939, 957–1078, 1093–1344, 1357–1646, 1693–1725, 1739–1843, and 1861–2644; these read EEGA…SFLS, TIPG…TELT, EDQS…VGKE, FGAP…QTGC, ETGE…ILPE, QKDG…SPEQ, ESTF…KDFQ, LAES…VPFS, and AELE…LVNG. Phosphoserine is present on serine 384. The segment covering 391–406 has biased composition (basic residues); that stretch reads EKRRLIKDKAGKKHLK. Composition is skewed to basic and acidic residues over residues 407 to 464 and 484 to 500; these read EKIS…KPDL and VKVD…ELSS. Tandem repeats lie at residues 415 to 417, 420 to 422, 424 to 426, 427 to 429, 431 to 433, 436 to 438, 440 to 442, 444 to 446, and 449 to 451. At threonine 504 the chain carries Phosphothreonine. A compositionally biased stretch (low complexity) spans 506 to 516; sequence PAQKGAAPPAA. A phosphoserine mark is found at serine 526 and serine 527. Basic and acidic residues-rich tracts occupy residues 536–554 and 584–595; these read EELK…DTGL and EGEHVEREKEVV. Copy 11 of the repeat occupies 539–541; that stretch reads KRE. A phosphoserine mark is found at serine 604 and serine 611. 2 stretches are compositionally biased toward basic and acidic residues: residues 614-631 and 638-675; these read EVEK…REAE and AARE…ETKA. Serine 643 carries the post-translational modification Phosphoserine. Position 663 is a phosphothreonine (threonine 663). Residues serine 666, serine 677, serine 690, and serine 785 each carry the phosphoserine modification. Composition is skewed to polar residues over residues 845–858 and 869–881; these read EDQS…PQTE and TVTS…TEAT. A phosphoserine mark is found at serine 872, serine 875, serine 876, and serine 889. Residue threonine 892 is modified to Phosphothreonine. 22 positions are modified to phosphoserine: serine 894, serine 898, serine 907, serine 980, serine 990, serine 998, serine 1007, serine 1013, serine 1022, serine 1029, serine 1037, serine 1061, serine 1132, serine 1134, serine 1148, serine 1160, serine 1178, serine 1188, serine 1191, serine 1197, serine 1206, and serine 1209. A compositionally biased stretch (basic and acidic residues) spans 1008-1028; it reads PVEDKSEPRDFQEDSWGETKH. The segment covering 1142-1157 has biased composition (polar residues); it reads SVLSVVSPDTTKQEAT. The segment covering 1180–1190 has biased composition (polar residues); sequence EDTQSLSFSEE. Polar residues predominate over residues 1198 to 1212; sequence LDISSKQLSPESLGT. Positions 1220–1236 are enriched in basic and acidic residues; sequence LGKEERGPVMKAEDDSC. Phosphoserine is present on residues serine 1252, serine 1280, serine 1301, serine 1304, and serine 1307. Residues 1293–1308 are compositionally biased toward low complexity; it reads TSDSSLTKSPESLSSP. Composition is skewed to basic and acidic residues over residues 1317 to 1336, 1357 to 1409, 1416 to 1428, 1436 to 1479, and 1487 to 1574; these read WEGK…ETRQ, QKDG…EDQG, AEKD…RDTD, EPRD…EHSI, and RAPD…KADS. A phosphoserine mark is found at serine 1504, serine 1568, serine 1574, and serine 1594. The segment covering 1599–1613 has biased composition (basic and acidic residues); sequence SKAREQEKKYWKEQD. Phosphoserine occurs at positions 1622, 1643, 1715, 1742, 1757, 1763, and 1767. The segment covering 1707 to 1718 has biased composition (polar residues); that stretch reads TPLQHTPRSPWT. Phosphothreonine is present on threonine 1772. A phosphoserine mark is found at serine 1778 and serine 1784. The span at 1789 to 1803 shows a compositional bias: polar residues; it reads TESTAPMRNEPTTPS. A compositionally biased stretch (pro residues) spans 1818–1839; sequence LPPAPLSPAPAPPTPAPEPHTP. Positions 1873–1885 are enriched in basic and acidic residues; the sequence is KDYRKAEGEREGE. Serine 1897 is modified (phosphoserine). Basic and acidic residues predominate over residues 1908-1930; the sequence is ATRDTEQTEPEQREPTPYPDERS. At threonine 1923 the chain carries Phosphothreonine. Residues 1984-1997 are compositionally biased toward polar residues; it reads SSPASPQNLQSDTP. Residue serine 1988 is modified to Phosphoserine. A compositionally biased stretch (pro residues) spans 2008–2034; the sequence is AVPPRQEPDPGPNVEPSITPPAVPPRA. Threonine 2026 carries the post-translational modification Phosphothreonine. Serine 2043 and serine 2077 each carry phosphoserine. A compositionally biased stretch (basic and acidic residues) spans 2055-2092; it reads PDRRTPSPKETGRGHWDDGTNDSDLEKGAREQPEKETR. The segment covering 2115 to 2125 has biased composition (low complexity); it reads SSLSSDSHLGS. Residues 2144–2153 are compositionally biased toward pro residues; sequence PAPPQLPSPA. A phosphoserine mark is found at serine 2204, serine 2221, serine 2225, serine 2228, serine 2229, and serine 2260. Over residues 2226 to 2237 the composition is skewed to polar residues; the sequence is EGSSSEATTPVI. The span at 2271–2287 shows a compositional bias: low complexity; the sequence is DLTPLSPAPSASLDLAP. Pro residues predominate over residues 2288–2298; sequence APAPAPAPAPG. Positions 2299–2309 are enriched in low complexity; it reads LPGDLGDGTLP. Residues 2352–2364 show a composition bias toward basic and acidic residues; that stretch reads AEKEEAEAPHAWE. Residue serine 2424 is modified to Phosphoserine. Low complexity predominate over residues 2477–2489; sequence SASDSGSSQSDSD. A compositionally biased stretch (pro residues) spans 2534–2550; the sequence is DPPPTPLPDPRPSPPRP. Residues 2565-2575 are compositionally biased toward basic and acidic residues; that stretch reads GRVERLREKGR. Over residues 2613 to 2623 the composition is skewed to low complexity; sequence RTVPRPRSTPS. Residues serine 2620 and serine 2635 each carry the phosphoserine modification.

Belongs to the MAP1 family. As to quaternary structure, 3 different light chains, LC1 (a cleavage product of MAP1B), LC2 (a cleavage product of MAP1A) and LC3 (produced by one of the MAP1LC3 genes), can associate with the MAP1A or MAP1B heavy chains. Interacts with guanylate kinase-like domain of DLG1, DLG2 and DLG4. Binds to CSNK1D. Interacts with TIAM2. Interacts with ELAVL4. Phosphorylated by CSNK1D. Post-translationally, LC2 is generated from MAP1A by proteolytic processing. It is free to associate with both MAP1A and MAP1B. In terms of tissue distribution, brain, heart and muscle.

It localises to the cytoplasm. The protein localises to the cytoskeleton. Structural protein involved in the filamentous cross-bridging between microtubules and other skeletal elements. The sequence is that of Microtubule-associated protein 1A (Map1a) from Rattus norvegicus (Rat).